A 398-amino-acid chain; its full sequence is Elongation factor Tu (398 aa).

The region spanning 10-207 (KPHVNIGTIG…TVDEYIPEPE (198 aa)) is the tr-type G domain. Positions 19–26 (GHVDHGKT) are G1. 19–26 (GHVDHGKT) serves as a coordination point for GTP. T26 provides a ligand contact to Mg(2+). The segment at 63-67 (GITIN) is G2. Positions 84 to 87 (DAPG) are G3. GTP is bound by residues 84 to 88 (DAPGH) and 139 to 142 (NKVD). The segment at 139–142 (NKVD) is G4. A G5 region spans residues 177–179 (SAL).

The protein belongs to the TRAFAC class translation factor GTPase superfamily. Classic translation factor GTPase family. EF-Tu/EF-1A subfamily. As to quaternary structure, monomer.

The protein resides in the cytoplasm. The enzyme catalyses GTP + H2O = GDP + phosphate + H(+). Its function is as follows. GTP hydrolase that promotes the GTP-dependent binding of aminoacyl-tRNA to the A-site of ribosomes during protein biosynthesis. This chain is Elongation factor Tu, found in Streptococcus pyogenes serotype M49 (strain NZ131).